The primary structure comprises 696 residues: Junctophilin-2 (696 aa).

The Cytoplasmic portion of the chain corresponds to 1–674; the sequence is MSGGRFDFDD…EVEVEEVPNT (674 aa). 6 MORN repeats span residues 14-36, 38-59, 60-79, 82-104, 106-128, and 129-151; these read YCGG…KGQG, YSGS…SGNT, FEGY…TKGR, YKGE…NSGA, YEGT…DGGT, and YQGQ…PYGM. Ser162 and Ser165 each carry phosphoserine. Disordered regions lie at residues 164-192 and 246-273; these read SSLR…SPPV and LSSG…AAPF. 2 MORN repeats span residues 285–307 and 308–330; these read YMGE…SGLR and YEGE…DGHR. Positions 345-359 match the Bipartite nuclear localization signal motif; the sequence is KRRVLPLKSSKVRQK. The tract at residues 439–664 is disordered; that stretch reads NSESLLEPPE…RKEVAQAKEA (226 aa). Phosphoserine is present on residues Ser440, Ser442, and Ser462. Basic and acidic residues predominate over residues 457 to 471; the sequence is ERPRESPQLHERETP. Thr470 is subject to Phosphothreonine. A compositionally biased stretch (pro residues) spans 474–487; that stretch reads EGGPPSPAGTPPQP. Ser479 carries the post-translational modification Phosphoserine. The residue at position 483 (Thr483) is a Phosphothreonine. The short motif at 488-492 is the Nuclear localization signal element; that stretch reads KRPRP. 2 positions are modified to phosphoserine: Ser527 and Ser533. Over residues 573 to 585 the composition is skewed to acidic residues; the sequence is PLEDEQEPEPEPE. Ser593, Ser597, and Ser613 each carry phosphoserine. Residues 631-644 show a composition bias toward basic and acidic residues; it reads AEPKAKARKTEARG. A helical; Anchor for type IV membrane protein membrane pass occupies residues 675 to 695; the sequence is VLICMVILLNIGLAILFVHLL.

It belongs to the junctophilin family. As to quaternary structure, interacts with TRPC3. Interacts with BAG5 and HSPA8; the interaction with HSPA8 is increased in the presence of BAG5. Interacts with MEF2C. Post-translationally, proteolytically cleaved by calpain in response to cardiac stress. The major cleavage site takes place at the C-terminus and leads to the release of the Junctophilin-2 N-terminal fragment chain (JP2NT). Phosphorylation on Ser-165, probably by PKC, affects RYR1-mediated calcium ion release, interaction with TRPC3, and skeletal muscle myotubule development. In terms of tissue distribution, abundantly expressed in skeletal muscle and heart. Weak expression in stomach and lung.

It localises to the cell membrane. The protein resides in the sarcoplasmic reticulum membrane. It is found in the endoplasmic reticulum membrane. The protein localises to the nucleus. Its function is as follows. Membrane-binding protein that provides a structural bridge between the plasma membrane and the sarcoplasmic reticulum and is required for normal excitation-contraction coupling in cardiomyocytes. Provides a structural foundation for functional cross-talk between the cell surface and intracellular Ca(2+) release channels by maintaining the 12-15 nm gap between the sarcolemma and the sarcoplasmic reticulum membranes in the cardiac dyads. Necessary for proper intracellular Ca(2+) signaling in cardiac myocytes via its involvement in ryanodine receptor-mediated calcium ion release. Contributes to the construction of skeletal muscle triad junctions. Transcription repressor required to safeguard against the deleterious effects of cardiac stress. Generated following cleavage of the Junctophilin-2 chain by calpain in response to cardiac stress in cardiomyocytes. Following cleavage and release from the membrane, translocates to the nucleus, binds DNA and represses expression of genes implicated in cell growth and differentiation, hypertrophy, inflammation and fibrosis. Modifies the transcription profile and thereby attenuates pathological remodeling in response to cardiac stress. Probably acts by competing with MEF2 transcription factors and TATA-binding proteins. This is Junctophilin-2 from Mus musculus (Mouse).